The following is a 167-amino-acid chain: Small ribosomal subunit protein uS7c (167 aa).

This sequence belongs to the universal ribosomal protein uS7 family. As to quaternary structure, part of the 30S ribosomal subunit.

The protein resides in the plastid. It is found in the chloroplast. Functionally, one of the primary rRNA binding proteins, it binds directly to 16S rRNA where it nucleates assembly of the head domain of the 30S subunit. The sequence is that of Small ribosomal subunit protein uS7c (rps7) from Tetradesmus obliquus (Green alga).